The sequence spans 485 residues: Ras-like GTPase YcjX (485 aa).

Residues 33 to 40 carry the Walker A motif motif; sequence GLSGAGKT. GTP-binding residues include Ser-35, Gly-36, Gly-38, Lys-39, Thr-40, Ala-41, Trp-110, Ser-113, Thr-114, Arg-115, Lys-355, Asp-357, and His-358. Residues Gly-36, Gly-38, Lys-39, Thr-40, Ala-41, Trp-110, Ser-113, and Thr-114 each coordinate GDP. Lys-355, Asp-357, His-358, Ser-395, Ala-396, and Ile-397 together coordinate GDP. A GTP-binding site is contributed by Ile-397.

Monomer in solution. It depends on Mg(2+) as a cofactor.

It carries out the reaction GTP + H2O = GDP + phosphate + H(+). With respect to regulation, alternates between an inactive form bound to GDP and an active form bound to GTP. Likely activated by a guanine nucleotide-exchange factor (GEF). Functionally, binds GTP and GDP. Has intrinsic GTPase activity. Does not hydrolyze ATP. May act as a transducer of stress responses. The sequence is that of Ras-like GTPase YcjX from Shewanella oneidensis (strain ATCC 700550 / JCM 31522 / CIP 106686 / LMG 19005 / NCIMB 14063 / MR-1).